The primary structure comprises 379 residues: ATPase ASNA1 homolog (379 aa).

Residues Met-1–Tyr-20 are disordered. Positions Asn-7–Asp-18 are enriched in low complexity. Position 46–53 (Lys-46–Thr-53) interacts with ATP. Asp-75 is an active-site residue. The ATP site is built by Glu-246 and Asn-273.

This sequence belongs to the arsA ATPase family. As to quaternary structure, homodimer.

Its subcellular location is the cytoplasm. It is found in the endoplasmic reticulum. ATPase required for the post-translational delivery of tail-anchored (TA) proteins to the endoplasmic reticulum. Recognizes and selectively binds the transmembrane domain of TA proteins in the cytosol. This complex then targets to the endoplasmic reticulum by membrane-bound receptors, where the tail-anchored protein is released for insertion. This process is regulated by ATP binding and hydrolysis. ATP binding drives the homodimer towards the closed dimer state, facilitating recognition of newly synthesized TA membrane proteins. ATP hydrolysis is required for insertion. Subsequently, the homodimer reverts towards the open dimer state, lowering its affinity for the membrane-bound receptor, and returning it to the cytosol to initiate a new round of targeting. This chain is ATPase ASNA1 homolog, found in Plasmodium falciparum (isolate 3D7).